Reading from the N-terminus, the 705-residue chain is Polyribonucleotide nucleotidyltransferase (705 aa).

The Mg(2+) site is built by Asp492 and Asp498. One can recognise a KH domain in the interval 559 to 618; it reads PLMITMKVSPDKIRHIIGPGGKIINKIIDETGVEIDIDDDGSVYILAQDQESGNRAKEII. The region spanning 628 to 696 is the S1 motif domain; that stretch reads GDIYEGRVKK…ELGRINLSRK (69 aa).

Belongs to the polyribonucleotide nucleotidyltransferase family. It depends on Mg(2+) as a cofactor.

The protein resides in the cytoplasm. It carries out the reaction RNA(n+1) + phosphate = RNA(n) + a ribonucleoside 5'-diphosphate. In terms of biological role, involved in mRNA degradation. Catalyzes the phosphorolysis of single-stranded polyribonucleotides processively in the 3'- to 5'-direction. The chain is Polyribonucleotide nucleotidyltransferase from Halothermothrix orenii (strain H 168 / OCM 544 / DSM 9562).